Consider the following 453-residue polypeptide: tRNA modification GTPase MnmE (453 aa).

(6S)-5-formyl-5,6,7,8-tetrahydrofolate is bound by residues Arg-22, Glu-79, and Lys-119. Residues 215 to 376 (GMKVVIAGRP…LQQHLKSLMG (162 aa)) form the TrmE-type G domain. Asn-225 contributes to the K(+) binding site. Residues 225–230 (NAGKSS), 244–250 (TEIAGTT), 269–272 (DTAG), and 334–337 (NKAD) each bind GTP. Mg(2+) is bound at residue Ser-229. The K(+) site is built by Thr-244, Ile-246, and Thr-249. Mg(2+) is bound at residue Thr-250. Position 453 (Lys-453) interacts with (6S)-5-formyl-5,6,7,8-tetrahydrofolate.

It belongs to the TRAFAC class TrmE-Era-EngA-EngB-Septin-like GTPase superfamily. TrmE GTPase family. In terms of assembly, homodimer. Heterotetramer of two MnmE and two MnmG subunits. The cofactor is K(+).

The protein resides in the cytoplasm. In terms of biological role, exhibits a very high intrinsic GTPase hydrolysis rate. Involved in the addition of a carboxymethylaminomethyl (cmnm) group at the wobble position (U34) of certain tRNAs, forming tRNA-cmnm(5)s(2)U34. The chain is tRNA modification GTPase MnmE from Shewanella sediminis (strain HAW-EB3).